A 254-amino-acid polypeptide reads, in one-letter code: Putative cysteine-rich repeat secretory protein 37 (254 aa).

Residues 1–29 (MYSSYSLSKRLVSIPILAIQLLLIRSVSS) form the signal peptide. Gnk2-homologous domains lie at 36 to 138 (YLNH…SIRS) and 145 to 251 (YRNV…LYPF).

Belongs to the cysteine-rich repeat secretory protein family.

It localises to the secreted. The protein is Putative cysteine-rich repeat secretory protein 37 (CRRSP37) of Arabidopsis thaliana (Mouse-ear cress).